Consider the following 926-residue polypeptide: ABC transporter A family member 6 (926 aa).

6 helical membrane-spanning segments follow: residues 34–54 (LIVIPLYLCVVLVCIQAVFDS), 336–356 (ASLIGPIFFTWVILLLFPVIL), 389–409 (FLAISTLYIVCLMIFGSAIGL), 418–438 (TIQFMFYFLYINLQISIAFLV), 451–471 (VAYIYVFGSGLLGAFLFQFLI), and 525–545 (DEVFTIIIVEWVVALVATYYI). One can recognise an ABC transporter domain in the interval 610 to 847 (IVCDNLKKVY…YGGSYVLTIT (238 aa)). 648–655 (GPNGAGKT) lines the ATP pocket.

Belongs to the ABC transporter superfamily. ABCA family. CPR flippase (TC 3.A.1.211) subfamily.

The protein localises to the membrane. The chain is ABC transporter A family member 6 (ABCA6) from Arabidopsis thaliana (Mouse-ear cress).